The following is a 1868-amino-acid chain: Inactive histone-lysine N-methyltransferase 2E (1868 aa).

The HCFC1-binding motif (HBM) signature appears at 63-66 (DHNY). Residues 118-166 (VTRCICGFTHDDGYMICCDKCSVWQHIDCMGIDRQHIPDTYLCERCQPR) form a PHD-type zinc finger. Zn(2+) is bound by residues cysteine 121, cysteine 123, cysteine 135, cysteine 138, histidine 143, cysteine 146, cysteine 160, and cysteine 163. Disordered stretches follow at residues 178–197 (RRKRENMSDGDTSATESGDE), 217–268 (ASRV…SSDS), and 308–329 (GSGNDSKDMNKSELSTNNSLFR). The region spanning 330–447 (PPVESHIQKN…KGTEITIAFD (118 aa)) is the SET domain. O-linked (GlcNAc) serine glycosylation is present at serine 435. O-linked (GlcNAc) threonine glycosylation is present at threonine 440. The segment at 472 to 504 (KRSSESTENINSGYETRRKKGKKEKDTSKEKDI) is disordered. A compositionally biased stretch (basic and acidic residues) spans 494–504 (KEKDTSKEKDI). The stretch at 559 to 613 (VEMESEEQIAERKRKMTREERKMEAILQAFARLEKREKRREQALERISTAKTEVK) forms a coiled coil. The span at 646 to 670 (NRTKQRKSFSRSRTHIGQQRRRHRT) shows a compositional bias: basic residues. The interval 646 to 682 (NRTKQRKSFSRSRTHIGQQRRRHRTVSMCSDIPPSSP) is disordered. Residues serine 837 and serine 845 each carry the phosphoserine modification. Over residues 884-908 (YSESSTPTPSPYATPTHTDITPTDP) the composition is skewed to low complexity. Disordered regions lie at residues 884–924 (YSES…ETYR) and 1038–1068 (SMETPAHDRTEPSNQLDSTHSGRGTMYSSWV). Positions 1049–1068 (PSNQLDSTHSGRGTMYSSWV) are enriched in polar residues. Serine 1070 carries the post-translational modification Phosphoserine. 4 disordered regions span residues 1165-1222 (KRQR…PPPA), 1236-1315 (SSEE…SNHI), 1334-1565 (PDAE…QNQQ), and 1585-1842 (VFTS…QASP). Residues 1184 to 1197 (SVSPHPSGSLSSSG) are compositionally biased toward low complexity. Polar residues predominate over residues 1203–1213 (SSENGEQAENQ). The residue at position 1282 (serine 1282) is a Phosphoserine. Residues 1282-1291 (SDHRKDKDSG) are compositionally biased toward basic and acidic residues. 2 stretches are compositionally biased toward low complexity: residues 1294 to 1312 (SPCVSCSPSHVQSPPSSHS) and 1348 to 1363 (PSPDTSQSPSKTSKPG). Serine 1364 carries the phosphoserine modification. 3 stretches are compositionally biased toward polar residues: residues 1389-1421 (ATVSEADNSVHQNPEPQHRQLSSNTPALSQNHA), 1451-1463 (HTENPPKSSTPHT), and 1488-1498 (SQSPQVGTPQR). A compositionally biased stretch (low complexity) spans 1506–1518 (AAAQNLQANPQQA). Over residues 1519 to 1547 (TSGALFTQTPSGQSSATYSQFNQQSLNST) the composition is skewed to polar residues. Pro residues predominate over residues 1548–1558 (APPPPPPPPPS). Residues 1585–1603 (VFTSGPNQALPGSTSQQSV) show a composition bias toward polar residues. Pro residues predominate over residues 1631–1642 (VPPPPPPPPAPG). Residues 1647-1656 (QQPSSHQQHS) are compositionally biased toward polar residues. The segment covering 1682–1692 (LPPPPPPPGPA) has biased composition (pro residues). Residues 1706 to 1716 (QSLQAQHQHVV) show a composition bias toward polar residues. A compositionally biased stretch (pro residues) spans 1719–1732 (APPPPPPPPPPPPA). Residues 1806–1816 (QGPNSIPTPTA) show a composition bias toward polar residues.

This sequence belongs to the class V-like SAM-binding methyltransferase superfamily. Histone-lysine methyltransferase family. TRX/MLL subfamily. As to quaternary structure, component of a complex composed of KMT2E, OGT and USP7; the complex stabilizes KMT2E, preventing KMT2E ubiquitination and proteasomal-mediated degradation. Interacts (via N-terminus) with OGT (via TRP repeats). Interacts with deubiquitinating enzyme USP7 (via MATH domain). Interacts (via HBM motif) with HCFC1 (via Kelch domain). Interacts with E2F1; the interaction is probably indirect and is mediated via HCFC1. Post-translationally, ubiquitinated. Deubiquitinated by USP7. O-glycosylated at Ser-435 and Thr-440 in the SET domain by OGT which probably prevents KMT2E proteasomal-mediated degradation.

The protein resides in the chromosome. The protein localises to the cytoplasm. Its subcellular location is the cytoskeleton. It is found in the microtubule organizing center. It localises to the centrosome. The protein resides in the nucleus speckle. In terms of biological role, associates with chromatin regions downstream of transcriptional start sites of active genes and thus regulates gene transcription. Chromatin interaction is mediated via the binding to tri-methylated histone H3 at 'Lys-4' (H3K4me3). Key regulator of hematopoiesis involved in terminal myeloid differentiation and in the regulation of hematopoietic stem cell (HSCs) self-renewal by a mechanism that involves DNA methylation. Also acts as an important cell cycle regulator, participating in cell cycle regulatory network machinery at multiple cell cycle stages including G1/S transition, S phase progression and mitotic entry. Recruited to E2F1 responsive promoters by HCFC1 where it stimulates tri-methylation of histone H3 at 'Lys-4' and transcriptional activation and thereby facilitates G1 to S phase transition. During myoblast differentiation, required to suppress inappropriate expression of S-phase-promoting genes and maintain expression of determination genes in quiescent cells. The sequence is that of Inactive histone-lysine N-methyltransferase 2E (Kmt2e) from Mus musculus (Mouse).